We begin with the raw amino-acid sequence, 574 residues long: Transmembrane glycoprotein NMB (574 aa).

Positions 1–22 are cleaved as a signal peptide; the sequence is MESLCGVLGFLLLAAGLPLQAA. Topologically, residues 23–502 are extracellular; that stretch reads KRFRDVLGHE…DPDSPLRAVN (480 aa). Residues N93, N134, N200, N249, N275, N296, N300, N306, and N312 are each glycosylated (N-linked (GlcNAc...) asparagine). Residues 250–338 enclose the PKD domain; sequence LSDEIFLRDL…STPPPPSTPP (89 aa). The segment at 320–353 is disordered; the sequence is PGPCPPPSPSTPPPPSTPPSPPPSPLPTLSTPSP. Over residues 321 to 345 the composition is skewed to pro residues; sequence GPCPPPSPSTPPPPSTPPSPPPSPL. N463 and N471 each carry an N-linked (GlcNAc...) asparagine glycan. The chain crosses the membrane as a helical span at residues 503–523; the sequence is GVLISIGCLAVLVTMVTILLY. Topologically, residues 524–574 are cytoplasmic; the sequence is KKHKAYKPIGNCPRNTVKGKGLSVLLSHAKAPFFRGDQEKDPLLQDKPRTL. The residue at position 546 (S546) is a Phosphoserine. The short motif at 558–560 is the Cell attachment site element; that stretch reads RGD.

This sequence belongs to the PMEL/NMB family. As to expression, may be up-regulated in bone metastatic breast cancer cells.

The protein resides in the cell membrane. Its subcellular location is the melanosome membrane. It localises to the early endosome membrane. Could be a melanogenic enzyme. This chain is Transmembrane glycoprotein NMB (Gpnmb), found in Mus musculus (Mouse).